The sequence spans 69 residues: Large ribosomal subunit protein uL29 (69 aa).

It belongs to the universal ribosomal protein uL29 family.

The protein is Large ribosomal subunit protein uL29 of Synechococcus sp. (strain WH7803).